Reading from the N-terminus, the 365-residue chain is DNA polymerase IV 1 (365 aa).

The region spanning 6 to 196 (VLHIDMDYFF…LNVSKLWGIG (191 aa)) is the UmuC domain. The Mg(2+) site is built by aspartate 10 and aspartate 113. Glutamate 114 is an active-site residue.

The protein belongs to the DNA polymerase type-Y family. As to quaternary structure, monomer. Mg(2+) is required as a cofactor.

The protein localises to the cytoplasm. The catalysed reaction is DNA(n) + a 2'-deoxyribonucleoside 5'-triphosphate = DNA(n+1) + diphosphate. In terms of biological role, poorly processive, error-prone DNA polymerase involved in untargeted mutagenesis. Copies undamaged DNA at stalled replication forks, which arise in vivo from mismatched or misaligned primer ends. These misaligned primers can be extended by PolIV. Exhibits no 3'-5' exonuclease (proofreading) activity. May be involved in translesional synthesis. The polypeptide is DNA polymerase IV 1 (dbh1) (Methanosarcina mazei (strain ATCC BAA-159 / DSM 3647 / Goe1 / Go1 / JCM 11833 / OCM 88) (Methanosarcina frisia)).